The following is a 175-amino-acid chain: ATP synthase subunit delta (175 aa).

It belongs to the ATPase delta chain family. F-type ATPases have 2 components, F(1) - the catalytic core - and F(0) - the membrane proton channel. F(1) has five subunits: alpha(3), beta(3), gamma(1), delta(1), epsilon(1). F(0) has three main subunits: a(1), b(2) and c(10-14). The alpha and beta chains form an alternating ring which encloses part of the gamma chain. F(1) is attached to F(0) by a central stalk formed by the gamma and epsilon chains, while a peripheral stalk is formed by the delta and b chains.

Its subcellular location is the cell inner membrane. F(1)F(0) ATP synthase produces ATP from ADP in the presence of a proton or sodium gradient. F-type ATPases consist of two structural domains, F(1) containing the extramembraneous catalytic core and F(0) containing the membrane proton channel, linked together by a central stalk and a peripheral stalk. During catalysis, ATP synthesis in the catalytic domain of F(1) is coupled via a rotary mechanism of the central stalk subunits to proton translocation. Its function is as follows. This protein is part of the stalk that links CF(0) to CF(1). It either transmits conformational changes from CF(0) to CF(1) or is implicated in proton conduction. The chain is ATP synthase subunit delta from Xanthomonas campestris pv. campestris (strain 8004).